Here is a 1084-residue protein sequence, read N- to C-terminus: Probable sucrose-phosphate synthase 1 (1084 aa).

Residues 25–46 show a composition bias toward gly residues; the sequence is GGGGGGGGGGGGGGGGGGGGGV. The segment at 25-61 is disordered; that stretch reads GGGGGGGGGGGGGGGGGGGGGVDPRSPAAGAASPRGP. Low complexity predominate over residues 48–61; the sequence is PRSPAAGAASPRGP.

This sequence belongs to the glycosyltransferase 1 family. As to quaternary structure, homodimer or homotetramer. As to expression, expressed in leaves mesophyll cells, scutellum of germinating seedlings and pollen of immature inflorescences.

The catalysed reaction is beta-D-fructose 6-phosphate + UDP-alpha-D-glucose = sucrose 6(F)-phosphate + UDP + H(+). Its pathway is glycan biosynthesis; sucrose biosynthesis; sucrose from D-fructose 6-phosphate and UDP-alpha-D-glucose: step 1/2. With respect to regulation, activity is regulated by phosphorylation and moderated by concentration of metabolites and light. In terms of biological role, plays a role in photosynthetic sucrose synthesis by catalyzing the rate-limiting step of sucrose biosynthesis from UDP-glucose and fructose- 6-phosphate. Involved in the regulation of carbon partitioning in the leaves of plants. May regulate the synthesis of sucrose and therefore play a major role as a limiting factor in the export of photoassimilates out of the leaf. Plays a role for sucrose availability that is essential for plant growth and fiber elongation. The chain is Probable sucrose-phosphate synthase 1 (SPS1) from Oryza sativa subsp. indica (Rice).